The following is a 397-amino-acid chain: Purine ribonucleoside efflux pump NepI (397 aa).

Topologically, residues 1-21 (MNENIAEKFRADGVARPNWSA) are cytoplasmic. The helical transmembrane segment at 22–42 (VFAVAFCVACLITVEFLPVSL) threads the bilayer. Over 43 to 54 (LTPMAQDLGISE) the chain is Periplasmic. The chain crosses the membrane as a helical span at residues 55–75 (GVAGQSVTVTAFVAMFSSLFI). Residues 76–85 (TQIIQATDRR) are Cytoplasmic-facing. Residues 86-106 (YIVILFAVLLTASCLMVSFAN) form a helical membrane-spanning segment. Position 107 (S107) is a topological domain, periplasmic. The chain crosses the membrane as a helical span at residues 108 to 128 (FTLLLLGRACLGLALGGFWAI). The Cytoplasmic portion of the chain corresponds to 129–147 (SASLTMRLVPARTVPKALS). The helical transmembrane segment at 148–168 (VIFGAVSIALVIAAPLGSFLG) threads the bilayer. The Periplasmic segment spans residues 169–175 (GIIGWRN). A helical transmembrane segment spans residues 176–196 (VFNAAAVMGVLCVIWVVKSLP). Over 197-215 (SLPGEPSHQKQNMFSLLQR) the chain is Cytoplasmic. The chain crosses the membrane as a helical span at residues 216-236 (PGVMAGMIAIFMSFAGQFAFF). Residues 237–255 (TYIRPVYMNLAGFDVDGLT) lie on the Periplasmic side of the membrane. Residues 256 to 276 (LVLLSFGIASFVGTSFSSYVL) traverse the membrane as a helical segment. At 277-281 (KRSVK) the chain is on the cytoplasmic side. A helical transmembrane segment spans residues 282–302 (LALAGAPLLLALSALTLIVWG). Residues 303 to 305 (SDK) lie on the Periplasmic side of the membrane. A helical membrane pass occupies residues 306–326 (TVAAAIAIIWGLAFALVPVGW). Topologically, residues 327 to 343 (STWITRSLADQAEKAGS) are cytoplasmic. A helical membrane pass occupies residues 344 to 364 (IQVAVIQLANTCGAAVGGYAL). Residues 365–366 (DN) lie on the Periplasmic side of the membrane. Residues 367–387 (FGLLSPLALSGGLMLLTALVV) form a helical membrane-spanning segment. Over 388–397 (AAKVRITPMS) the chain is Cytoplasmic.

It belongs to the major facilitator superfamily. DHA1 family. NepI (TC 2.A.1.2.26) subfamily.

The protein resides in the cell inner membrane. The catalysed reaction is inosine(in) + H(+)(out) = inosine(out) + H(+)(in). The enzyme catalyses guanosine(in) + H(+)(out) = guanosine(out) + H(+)(in). Involved in the efflux of purine ribonucleosides, such as inosine and guanosine. The protein is Purine ribonucleoside efflux pump NepI of Salmonella paratyphi A (strain ATCC 9150 / SARB42).